The primary structure comprises 382 residues: ADP,ATP carrier protein, mitochondrial (382 aa).

Residues 1–71 (MAEQANQPTV…PMMSSSPIFA (71 aa)) constitute a mitochondrion transit peptide. Solcar repeat units follow at residues 80 to 173 (KNFM…FKRL), 185 to 277 (KWFG…LKPV), and 285 to 371 (DNFF…LQIL). A run of 5 helical transmembrane segments spans residues 82–109 (FMIDFLMGGVSAAVSKTAAAPIERVKLL), 150–174 (TANVIRYFPTQALNFAFKDYFKRLF), 183–203 (YWKWFGGNLASGGAAGASSLF), 253–274 (FNISCVGIIVYRGLYFGMYDSL), and 288–308 (FASFALGWLITNGAGLASYPI). ADP-binding residues include R155 and K167. R312 is a binding site for ADP. The interval 312–317 (RRRMMM) is important for transport activity. A Nucleotide carrier signature motif motif is present at residues 312-317 (RRRMMM). A helical transmembrane segment spans residues 348-368 (AGANILRAIAGAGVLSGYDQL).

The protein belongs to the mitochondrial carrier (TC 2.A.29) family. Monomer.

It localises to the mitochondrion inner membrane. The catalysed reaction is ADP(in) + ATP(out) = ADP(out) + ATP(in). With respect to regulation, the matrix-open state (m-state) is inhibited by the membrane-permeable bongkrekic acid (BKA). The cytoplasmic-open state (c-state) is inhibited by the membrane-impermeable toxic inhibitor carboxyatractyloside (CATR). Its function is as follows. ADP:ATP antiporter that mediates import of ADP into the mitochondrial matrix for ATP synthesis, and export of ATP out to fuel the cell. Cycles between the cytoplasmic-open state (c-state) and the matrix-open state (m-state): operates by the alternating access mechanism with a single substrate-binding site intermittently exposed to either the cytosolic (c-state) or matrix (m-state) side of the inner mitochondrial membrane. In Oryza sativa subsp. japonica (Rice), this protein is ADP,ATP carrier protein, mitochondrial.